Reading from the N-terminus, the 516-residue chain is Solute carrier family 49 member A3 (516 aa).

A compositionally biased stretch (basic and acidic residues) spans 1–10 (MAGTMDRLED). Positions 1–22 (MAGTMDRLEDCNSPETSGTAGD) are disordered. 12 consecutive transmembrane segments (helical) span residues 34–54 (WVFL…WLSF), 74–94 (WLSL…IWVL), 104–124 (ILGA…CLPV), 139–159 (LCAL…ALWF), 170–190 (ISTM…PALV), 199–219 (MLGI…VCLW), 253–273 (VLLA…SALL), 289–309 (LCGA…GLYV), 321–341 (IGLC…QLQG), 344–364 (LALA…APVV), 382–402 (GLIF…LTAL), and 425–445 (VSLL…VIFF). The segment at 453 to 516 (EAESGGSSSP…EWAETMPRDV (64 aa)) is disordered. Residues 504 to 516 (GHSEWAETMPRDV) are compositionally biased toward basic and acidic residues.

The protein belongs to the major facilitator superfamily.

Its subcellular location is the membrane. This chain is Solute carrier family 49 member A3 (Slc49a3), found in Mus musculus (Mouse).